Reading from the N-terminus, the 58-residue chain is Large ribosomal subunit protein uL24 (58 aa).

The protein belongs to the universal ribosomal protein uL24 family. In terms of assembly, part of the 50S ribosomal subunit.

Its function is as follows. One of two assembly initiator proteins, it binds directly to the 5'-end of the 23S rRNA, where it nucleates assembly of the 50S subunit. One of the proteins that surrounds the polypeptide exit tunnel on the outside of the subunit. This Spiroplasma citri protein is Large ribosomal subunit protein uL24 (rplX).